A 325-amino-acid polypeptide reads, in one-letter code: Lipoyl synthase (325 aa).

Positions methionine 1–proline 32 are disordered. Residues alanine 19–proline 32 show a composition bias toward basic and acidic residues. [4Fe-4S] cluster-binding residues include cysteine 66, cysteine 71, cysteine 77, cysteine 92, cysteine 96, cysteine 99, and serine 305. Positions tryptophan 78–leucine 294 constitute a Radical SAM core domain.

It belongs to the radical SAM superfamily. Lipoyl synthase family. [4Fe-4S] cluster is required as a cofactor.

Its subcellular location is the cytoplasm. The catalysed reaction is [[Fe-S] cluster scaffold protein carrying a second [4Fe-4S](2+) cluster] + N(6)-octanoyl-L-lysyl-[protein] + 2 oxidized [2Fe-2S]-[ferredoxin] + 2 S-adenosyl-L-methionine + 4 H(+) = [[Fe-S] cluster scaffold protein] + N(6)-[(R)-dihydrolipoyl]-L-lysyl-[protein] + 4 Fe(3+) + 2 hydrogen sulfide + 2 5'-deoxyadenosine + 2 L-methionine + 2 reduced [2Fe-2S]-[ferredoxin]. It functions in the pathway protein modification; protein lipoylation via endogenous pathway; protein N(6)-(lipoyl)lysine from octanoyl-[acyl-carrier-protein]: step 2/2. In terms of biological role, catalyzes the radical-mediated insertion of two sulfur atoms into the C-6 and C-8 positions of the octanoyl moiety bound to the lipoyl domains of lipoate-dependent enzymes, thereby converting the octanoylated domains into lipoylated derivatives. This Beijerinckia indica subsp. indica (strain ATCC 9039 / DSM 1715 / NCIMB 8712) protein is Lipoyl synthase.